The chain runs to 300 residues: Small ribosomal subunit protein uS2 (300 aa).

Residues 269-300 (WEADGADWAASSAAAPAESWAAEAQGAEGAKW) are disordered.

Belongs to the universal ribosomal protein uS2 family. Component of the small ribosomal subunit. Mature ribosomes consist of a small (40S) and a large (60S) subunit. The 40S subunit contains about 33 different proteins and 1 molecule of RNA (18S). The 60S subunit contains about 49 different proteins and 3 molecules of RNA (25S, 5.8S and 5S). Interacts with rps21.

The protein localises to the cytoplasm. Its function is as follows. Required for the assembly and/or stability of the 40S ribosomal subunit. Required for the processing of the 20S rRNA-precursor to mature 18S rRNA in a late step of the maturation of 40S ribosomal subunits. This is Small ribosomal subunit protein uS2 (rps0) from Aspergillus terreus (strain NIH 2624 / FGSC A1156).